A 312-amino-acid chain; its full sequence is Olfactory receptor 1F1 (312 aa).

Residues 1 to 25 lie on the Extracellular side of the membrane; sequence MSGTNQSSVSEFLLLGLSRQPQQQH. Asn5 carries N-linked (GlcNAc...) asparagine glycosylation. The chain crosses the membrane as a helical span at residues 26-49; the sequence is LLFVFFLSMYLATVLGNLLIILSV. The Cytoplasmic segment spans residues 50–57; sequence SIDSCLHT. The chain crosses the membrane as a helical span at residues 58–79; sequence PMYFFLSNLSFVDICFSFTTVP. Topologically, residues 80–100 are extracellular; that stretch reads KMLANHILETQTISFCGCLTQ. A disulfide bridge links Cys97 with Cys189. A helical transmembrane segment spans residues 101–120; it reads MYFVFMFVDMDNFLLAVMAY. Topologically, residues 121-139 are cytoplasmic; the sequence is DHFVAVCHPLHYTAKMTHQ. The chain crosses the membrane as a helical span at residues 140–158; that stretch reads LCALLVAGLWVVANLNVLL. The Extracellular segment spans residues 159-196; the sequence is HTLLMAPLSFCADNAITHFFCDVTPLLKLSCSDTHLNE. The helical transmembrane segment at 197 to 219 threads the bilayer; sequence VIILSEGALVMITPFLCILASYM. At 220–236 the chain is on the cytoplasmic side; sequence HITCTVLKVPSTKGRWK. The helical transmembrane segment at 237–259 threads the bilayer; that stretch reads AFSTCGSHLAVVLLFYSTIIAVY. At 260–272 the chain is on the extracellular side; it reads FNPLSSHSAEKDT. The helical transmembrane segment at 273-292 threads the bilayer; that stretch reads MATVLYTVVTPMLNPFIYSL. Topologically, residues 293–312 are cytoplasmic; sequence RNRYLKGALKKVVGRVVFSV.

The protein belongs to the G-protein coupled receptor 1 family.

The protein localises to the cell membrane. Its function is as follows. Odorant receptor. In Homo sapiens (Human), this protein is Olfactory receptor 1F1 (OR1F1).